The following is a 434-amino-acid chain: MASVRETGVNVSNDGITVVLGSQWGDEGKGKLVDILCDNVDVCARCQGGNNAGHTIVANGVTYDFHILPSGLVNPKCQNLIGSGVVVYLPAFFSELEKLEQKGLKCRDRIFISDRAHLVFDYHQRADALNEAELGKQSIGTTGKGIGPAYSTKATRSGIRVHHLYHWAEFEARYRKNVADLQKRYGAFEYDVEAELIRYKELAQRLKPFVIDAVAFMYEALQSKKRILVEGANALMLDLDFGTYPFVTSSNTTVGGVCTGLGVPPQRIANSIGVVKAYTTRVGAGPFPTEQLNEIGDHLQSVGREVGVTTGRKRRCGWLDLVVVKYSTMINGYTSLNLTKLDILDALDEIKVAVAYIINGKRIETFPADLDSLEEAEIVYETFPGWKVPTTGITHWDQMPENAKKYIEFIEKFVGVPITFIGVGPGRDEMLVKE.

Residues 25 to 31 (GDEGKGK) and 53 to 55 (GHT) contribute to the GTP site. Asp-26 functions as the Proton acceptor in the catalytic mechanism. Mg(2+) is bound by residues Asp-26 and Gly-53. Residues 26 to 29 (DEGK), 51 to 54 (NAGH), Thr-142, Arg-156, Asn-233, Thr-248, and Arg-312 each bind IMP. His-54 serves as the catalytic Proton donor. 308–314 (VTTGRKR) contributes to the substrate binding site. GTP is bound by residues Arg-314, 340–342 (KLD), and 422–424 (GVG).

It belongs to the adenylosuccinate synthetase family. In terms of assembly, homodimer. The cofactor is Mg(2+).

The protein localises to the cytoplasm. It carries out the reaction IMP + L-aspartate + GTP = N(6)-(1,2-dicarboxyethyl)-AMP + GDP + phosphate + 2 H(+). It participates in purine metabolism; AMP biosynthesis via de novo pathway; AMP from IMP: step 1/2. Its activity is regulated as follows. Competitively Inhibited by GMP. Allosterically inhibited by AMP. In terms of biological role, plays an important role in the de novo pathway and in the salvage pathway of purine nucleotide biosynthesis. Catalyzes the first committed step in the biosynthesis of AMP from IMP. The polypeptide is Adenylosuccinate synthetase (ade2) (Schizosaccharomyces pombe (strain 972 / ATCC 24843) (Fission yeast)).